The following is a 1746-amino-acid chain: Tenascin (1746 aa).

A signal peptide spans 1–22; that stretch reads MGVVTRLLVGTFLASLALPAQG. Positions 23 to 185 are involved in hexamer formation; the sequence is GVLKKVIRHK…CEPGWKGPNC (163 aa). Asn38 is a glycosylation site (N-linked (GlcNAc...) asparagine). 3 positions are modified to phosphoserine: Ser65, Ser70, and Ser72. A glycan (O-linked (Xyl...) (chondroitin sulfate) serine) is linked at Ser72. A coiled-coil region spans residues 118-145; the sequence is DVKELLSRLEELENLVSSLREQCTSGAG. Asn166 and Asn184 each carry an N-linked (GlcNAc...) asparagine glycan. In terms of domain architecture, EGF-like 1; incomplete spans 174 to 186; sequence CVCEPGWKGPNCS. EGF-like domains follow at residues 187–217, 218–249, 250–280, 281–311, 312–342, 343–373, 374–404, 405–435, 436–466, 467–497, 498–528, 529–559, 560–589, and 590–620; these read EPECPSNCHLRGQCVDGQCVCNEGFTGEDCS, QLACPSDCNDQGKCVNGVCVCFEGYSGVDCSR, ETCPVPCSEEHGRCVDGRCVCQEGFAGEDCN, EPLCLHNCHGRGRCVENECVCDEGFTGEDCG, ELICPKDCFDRGRCINGTCYCDEGFEGEDCG, RLACPHGCRGRGRCEEGQCVCDEGFAGADCS, ERRCPSDCHNRGRCLDGRCECDDGFEGEDCG, ELRCPGGCSGHGRCVNGQCVCDEGRTGEDCS, QLRCPNDCHGRGRCVQGRCECEHGFQGYDCS, EMSCPHDCHQHGRCVNGMCVCDDGYTGEDCR, ELRCPGDCSQRGRCVDGRCVCEHGFAGPDCA, DLACPSDCHGRGRCVNGQCVCHEGFTGKDCG, QRRCPGDCHGQGRCVDGQCVCHEGFTGLDC, and GQRSCPNDCSNWGQCVSGRCICNEGYSGEDC. Disulfide bonds link Cys190-Cys200, Cys194-Cys205, Cys207-Cys216, Cys221-Cys231, Cys225-Cys236, Cys238-Cys247, Cys252-Cys263, Cys256-Cys268, Cys270-Cys279, Cys284-Cys294, Cys288-Cys299, Cys301-Cys310, Cys315-Cys325, Cys319-Cys330, Cys332-Cys341, Cys346-Cys356, Cys350-Cys361, Cys363-Cys372, Cys377-Cys387, Cys381-Cys392, Cys394-Cys403, Cys408-Cys418, Cys412-Cys423, Cys425-Cys434, Cys439-Cys449, Cys443-Cys454, Cys456-Cys465, Cys470-Cys480, Cys474-Cys485, Cys487-Cys496, Cys501-Cys511, Cys505-Cys516, Cys518-Cys527, Cys532-Cys542, Cys536-Cys547, Cys549-Cys558, Cys563-Cys573, Cys567-Cys578, Cys580-Cys589, Cys594-Cys604, Cys598-Cys609, and Cys611-Cys620. N-linked (GlcNAc...) asparagine glycosylation is present at Asn327. Fibronectin type-III domains lie at 625–717, 718–801, 805–894, 895–988, 989–1075, 1076–1166, 1167–1256, 1257–1346, 1347–1433, and 1434–1522; these read PPKD…TPEG, LKFK…VTTT, APSQ…TGLD, APRN…LDPP, KDFR…AGEP, EIGN…EAEP, EVDN…TAMG, SPKE…ALDG, PSGL…TDLD, and SPRD…IGLL. An N-linked (GlcNAc...) asparagine glycan is attached at Asn788. A Phosphothreonine modification is found at Thr905. N-linked (GlcNAc...) asparagine glycosylation is found at Asn1034, Asn1079, and Asn1121. Asn1354 carries N-linked (GlcNAc...) asparagine glycosylation. Positions 1520-1735 constitute a Fibrinogen C-terminal domain; that stretch reads GLLYPFPRDC…FAEMKLRPSN (216 aa).

The protein belongs to the tenascin family. As to quaternary structure, homohexamer; disulfide-linked. A homotrimer may be formed in the triple coiled-coil region and may be stabilized by disulfide rings at both ends. Two of such half-hexabrachions may be disulfide linked within the central globule. Interacts with CSPG4. Interacts (via the 3rd fibronectin type-III domain) with integrin ITGA9:ITGB1. Submaxillary glands and brain.

The protein resides in the secreted. Its subcellular location is the extracellular space. It localises to the extracellular matrix. Extracellular matrix protein implicated in guidance of migrating neurons as well as axons during development, synaptic plasticity as well as neuronal regeneration. Promotes neurite outgrowth from cortical neurons grown on a monolayer of astrocytes. Ligand for integrins alpha-8/beta-1, alpha-9/beta-1, alpha-V/beta-3 and alpha-V/beta-6. In tumors, stimulates angiogenesis by elongation, migration and sprouting of endothelial cells. This Sus scrofa (Pig) protein is Tenascin (TNC).